The following is a 191-amino-acid chain: Cell division protein SepF (191 aa).

Over residues 156–167 (EEASPSNMSNKG) the composition is skewed to polar residues. The interval 156–191 (EEASPSNMSNKGNDLISKETSPAPEPAWGETVATAL) is disordered.

The protein belongs to the SepF family. In terms of assembly, homodimer. Interacts with FtsZ.

It localises to the cytoplasm. Functionally, cell division protein that is part of the divisome complex and is recruited early to the Z-ring. Probably stimulates Z-ring formation, perhaps through the cross-linking of FtsZ protofilaments. Its function overlaps with FtsA. The chain is Cell division protein SepF from Prochlorococcus marinus (strain NATL1A).